A 39-amino-acid polypeptide reads, in one-letter code: Photosystem II reaction center protein L (39 aa).

The helical transmembrane segment at 18–38 threads the bilayer; the sequence is SLYLGLLLVFVTAVLFTSYFF.

Belongs to the PsbL family. In terms of assembly, PSII is composed of 1 copy each of membrane proteins PsbA, PsbB, PsbC, PsbD, PsbE, PsbF, PsbH, PsbI, PsbJ, PsbK, PsbL, PsbM, PsbT, PsbX, PsbY, Psb30/Ycf12, peripheral proteins PsbO, CyanoQ (PsbQ), PsbU, PsbV and a large number of cofactors. It forms dimeric complexes.

It localises to the cellular thylakoid membrane. Functionally, one of the components of the core complex of photosystem II (PSII). PSII is a light-driven water:plastoquinone oxidoreductase that uses light energy to abstract electrons from H(2)O, generating O(2) and a proton gradient subsequently used for ATP formation. It consists of a core antenna complex that captures photons, and an electron transfer chain that converts photonic excitation into a charge separation. This subunit is found at the monomer-monomer interface and is required for correct PSII assembly and/or dimerization. The protein is Photosystem II reaction center protein L of Prochlorococcus marinus (strain MIT 9313).